The primary structure comprises 369 residues: Molybdenum import ATP-binding protein ModC (369 aa).

Residues 3–246 enclose the ABC transporter domain; it reads TRPEQASKDT…LDLPLAHGDS (244 aa). 44 to 51 is a binding site for ATP; that stretch reads GPSGSGKT. In terms of domain architecture, Mop spans 305 to 369; it reads DTSILNILPA…AQIKGVAILG (65 aa).

The protein belongs to the ABC transporter superfamily. Molybdate importer (TC 3.A.1.8) family. The complex is composed of two ATP-binding proteins (ModC), two transmembrane proteins (ModB) and a solute-binding protein (ModA).

Its subcellular location is the cell inner membrane. It catalyses the reaction molybdate(out) + ATP + H2O = molybdate(in) + ADP + phosphate + H(+). In terms of biological role, part of the ABC transporter complex ModABC involved in molybdenum import. Responsible for energy coupling to the transport system. In Albidiferax ferrireducens (strain ATCC BAA-621 / DSM 15236 / T118) (Rhodoferax ferrireducens), this protein is Molybdenum import ATP-binding protein ModC.